The primary structure comprises 476 residues: Bifunctional protein HldE (476 aa).

Residues 1–318 are ribokinase; it reads MKPVLPDYSK…AEAVHGSKDT (318 aa). Position 195-198 (195-198) interacts with ATP; sequence NMSE. D264 is an active-site residue. The cytidylyltransferase stretch occupies residues 344-476; sequence MTNGCFDILH…IIEAIKGGRG (133 aa).

The protein in the N-terminal section; belongs to the carbohydrate kinase PfkB family. This sequence in the C-terminal section; belongs to the cytidylyltransferase family. As to quaternary structure, homodimer.

It catalyses the reaction D-glycero-beta-D-manno-heptose 7-phosphate + ATP = D-glycero-beta-D-manno-heptose 1,7-bisphosphate + ADP + H(+). The catalysed reaction is D-glycero-beta-D-manno-heptose 1-phosphate + ATP + H(+) = ADP-D-glycero-beta-D-manno-heptose + diphosphate. Its pathway is nucleotide-sugar biosynthesis; ADP-L-glycero-beta-D-manno-heptose biosynthesis; ADP-L-glycero-beta-D-manno-heptose from D-glycero-beta-D-manno-heptose 7-phosphate: step 1/4. It participates in nucleotide-sugar biosynthesis; ADP-L-glycero-beta-D-manno-heptose biosynthesis; ADP-L-glycero-beta-D-manno-heptose from D-glycero-beta-D-manno-heptose 7-phosphate: step 3/4. Catalyzes the phosphorylation of D-glycero-D-manno-heptose 7-phosphate at the C-1 position to selectively form D-glycero-beta-D-manno-heptose-1,7-bisphosphate. Its function is as follows. Catalyzes the ADP transfer from ATP to D-glycero-beta-D-manno-heptose 1-phosphate, yielding ADP-D-glycero-beta-D-manno-heptose. The polypeptide is Bifunctional protein HldE (Vibrio cholerae serotype O1 (strain M66-2)).